Reading from the N-terminus, the 391-residue chain is Multidrug resistance protein MdtL (391 aa).

Residues 1–3 are Cytoplasmic-facing; sequence MSR. A helical membrane pass occupies residues 4–24; sequence FLICSFALVLLYPAGIDMYLV. At 25–41 the chain is on the periplasmic side; the sequence is GLPRIAADLNASEAQLH. A helical transmembrane segment spans residues 42–62; it reads IAFSVYLAGMAAAMLFAGKVA. Residues 63–68 are Cytoplasmic-facing; sequence DRSGRK. The chain crosses the membrane as a helical span at residues 69 to 89; that stretch reads PVAIPGAALFIIASVFCSLAE. Residues 90–92 lie on the Periplasmic side of the membrane; the sequence is TST. The chain crosses the membrane as a helical span at residues 93–113; it reads LFLAGRFLQGLGAGCCYVVAF. Residues 114-130 are Cytoplasmic-facing; sequence AILRDTLDDRRRAKVLS. The chain crosses the membrane as a helical span at residues 131–151; it reads LLNGITCIIPVLAPVLGHLIM. Residues 152–157 are Periplasmic-facing; that stretch reads LKFPWQ. The chain crosses the membrane as a helical span at residues 158–178; sequence SLFWTMAIMGIAVLMLSLFIL. Residues 179 to 198 lie on the Cytoplasmic side of the membrane; that stretch reads KETRPAAPAASDKSRENSES. A helical transmembrane segment spans residues 199 to 221; that stretch reads LLNRFFLSRVVITTLSVSVILTF. Residues 222 to 244 lie on the Periplasmic side of the membrane; that stretch reads VNTSPVLLMEIMGFERGEYATIM. Residues 245–265 form a helical membrane-spanning segment; that stretch reads ALTAGVSMTVSFSTPFALGIF. Residues 266 to 268 are Cytoplasmic-facing; the sequence is KPR. A helical transmembrane segment spans residues 269–289; it reads TLMITSQVLFLAAGITLAVSP. Over 290–292 the chain is Periplasmic; sequence SHA. Residues 293–313 form a helical membrane-spanning segment; the sequence is ISLFGITLICAGFSVGFGVAM. Residues 314–330 lie on the Cytoplasmic side of the membrane; it reads SQALGPFSLRAGVASST. The chain crosses the membrane as a helical span at residues 331–351; it reads LGIAQVCGSSLWIWLAAVVGI. Residues 352-355 are Periplasmic-facing; sequence GAWN. The chain crosses the membrane as a helical span at residues 356-376; sequence MLIGILIACSIVSLLLIMFVA. The Cytoplasmic segment spans residues 377–391; it reads PGRPVAAHEEIHHHA.

This sequence belongs to the major facilitator superfamily. DHA1 family. MdtL (TC 2.A.1.2.22) subfamily.

It is found in the cell inner membrane. In Shigella dysenteriae serotype 1 (strain Sd197), this protein is Multidrug resistance protein MdtL.